The chain runs to 276 residues: Putative non-heme chloroperoxidase (276 aa).

One can recognise an AB hydrolase-1 domain in the interval 26–263; sequence PIVLIHGFPL…GGPHAINWTH (238 aa). Active-site residues include Ser-99, Asp-228, and His-257.

The protein belongs to the AB hydrolase superfamily. Bacterial non-heme haloperoxidase / perhydrolase family.

The sequence is that of Putative non-heme chloroperoxidase from Synechocystis sp. (strain ATCC 27184 / PCC 6803 / Kazusa).